The sequence spans 126 residues: MIRTMLQGKLHRVKVTHADLHYEGSCAIDQDFLDAAGILENEAIDIWNVTNGKRFSTYAIAAERGSRIISVNGAAAHCASVGDIVIIASFVNMPDEEARTWRPNVAYFEGDNEMKRTAKAIPVQVA.

Catalysis depends on S25, which acts as the Schiff-base intermediate with substrate; via pyruvic acid. S25 carries the pyruvic acid (Ser) modification. T57 provides a ligand contact to substrate. The Proton donor role is filled by Y58. Residue 73-75 (GAA) participates in substrate binding.

This sequence belongs to the PanD family. As to quaternary structure, heterooctamer of four alpha and four beta subunits. Pyruvate is required as a cofactor. Post-translationally, is synthesized initially as an inactive proenzyme, which is activated by self-cleavage at a specific serine bond to produce a beta-subunit with a hydroxyl group at its C-terminus and an alpha-subunit with a pyruvoyl group at its N-terminus.

Its subcellular location is the cytoplasm. The enzyme catalyses L-aspartate + H(+) = beta-alanine + CO2. Its pathway is cofactor biosynthesis; (R)-pantothenate biosynthesis; beta-alanine from L-aspartate: step 1/1. Its function is as follows. Catalyzes the pyruvoyl-dependent decarboxylation of aspartate to produce beta-alanine. This chain is Aspartate 1-decarboxylase, found in Escherichia coli O6:K15:H31 (strain 536 / UPEC).